The chain runs to 383 residues: Succinyl-diaminopimelate desuccinylase (383 aa).

Histidine 79 lines the Zn(2+) pocket. Aspartate 81 is a catalytic residue. Position 110 (aspartate 110) interacts with Zn(2+). Glutamate 141 (proton acceptor) is an active-site residue. 3 residues coordinate Zn(2+): glutamate 142, glutamate 170, and histidine 355.

It belongs to the peptidase M20A family. DapE subfamily. Homodimer. It depends on Zn(2+) as a cofactor. Co(2+) serves as cofactor.

The catalysed reaction is N-succinyl-(2S,6S)-2,6-diaminopimelate + H2O = (2S,6S)-2,6-diaminopimelate + succinate. Its pathway is amino-acid biosynthesis; L-lysine biosynthesis via DAP pathway; LL-2,6-diaminopimelate from (S)-tetrahydrodipicolinate (succinylase route): step 3/3. Catalyzes the hydrolysis of N-succinyl-L,L-diaminopimelic acid (SDAP), forming succinate and LL-2,6-diaminopimelate (DAP), an intermediate involved in the bacterial biosynthesis of lysine and meso-diaminopimelic acid, an essential component of bacterial cell walls. This chain is Succinyl-diaminopimelate desuccinylase, found in Helicobacter pylori (strain ATCC 700392 / 26695) (Campylobacter pylori).